A 434-amino-acid chain; its full sequence is Trigger factor (434 aa).

One can recognise a PPIase FKBP-type domain in the interval 160 to 245 (GDKVKMNFVG…LTEVQAANLP (86 aa)).

The protein belongs to the FKBP-type PPIase family. Tig subfamily.

It localises to the cytoplasm. It catalyses the reaction [protein]-peptidylproline (omega=180) = [protein]-peptidylproline (omega=0). Functionally, involved in protein export. Acts as a chaperone by maintaining the newly synthesized protein in an open conformation. Functions as a peptidyl-prolyl cis-trans isomerase. The chain is Trigger factor from Shewanella sp. (strain W3-18-1).